Consider the following 723-residue polypeptide: Zinc finger CCCH domain-containing protein 11A (723 aa).

C3H1-type zinc fingers lie at residues 2-29 (SKQG…HCEA), 31-57 (LGNE…HMEI), and 60-87 (KRSE…HTKG). 5 disordered regions span residues 142 to 208 (ENSE…KQDD), 223 to 256 (KKQK…EKEN), 404 to 428 (KRAE…KLEE), 450 to 526 (EKAL…VKSL), and 565 to 681 (VKPS…APLS). Positions 160–175 (ADDDEDDDDQLSEEGE) are enriched in acidic residues. Positions 376–411 (KTFSEALAERKQRRLEEEKQKLEEFLTEKRAEGERK) form a coiled coil. Positions 511–522 (PSNQSAPNSKAQ) are enriched in polar residues. Over residues 609–620 (KKAALTAAPALP) the composition is skewed to low complexity. Positions 637-649 (LELQLGSQADSVE) are enriched in polar residues. A compositionally biased stretch (low complexity) spans 650–672 (QSGDSSSASASSQSVAKAQQLSS).

The protein resides in the nucleus speckle. In terms of biological role, through its association with TREX complex components, may participate in the export and post-transcriptional coordination of selected mRNA transcripts. Binds RNA. This is Zinc finger CCCH domain-containing protein 11A (ZC3H11A) from Gallus gallus (Chicken).